The following is a 318-amino-acid chain: Protease HtpX homolog (318 aa).

2 helical membrane passes run 6-26 (TAMLLAFMTALFMFVGFLIGG) and 28-48 (AGMMIAFLIAAGMNFFSYWNS). His130 provides a ligand contact to Zn(2+). Residue Glu131 is part of the active site. Residue His134 coordinates Zn(2+). A run of 2 helical transmembrane segments spans residues 145–165 (ITATLAGAISMLGNFAFFFGG) and 173–193 (PLGFVGVLVAMIVAPLAAMLV). Glu202 is a Zn(2+) binding site. The interval 284-318 (NVSTGPVRAVNPTRKSRSVPNTGRGGSQPPRGPWS) is disordered.

It belongs to the peptidase M48B family. Zn(2+) is required as a cofactor.

Its subcellular location is the cell inner membrane. This chain is Protease HtpX homolog, found in Rhizobium etli (strain CIAT 652).